Consider the following 90-residue polypeptide: Small ribosomal subunit protein bS16 (90 aa).

It belongs to the bacterial ribosomal protein bS16 family.

The sequence is that of Small ribosomal subunit protein bS16 from Streptococcus gordonii (strain Challis / ATCC 35105 / BCRC 15272 / CH1 / DL1 / V288).